Here is a 405-residue protein sequence, read N- to C-terminus: 4-hydroxy-3-methylbut-2-en-1-yl diphosphate synthase (flavodoxin) (405 aa).

[4Fe-4S] cluster-binding residues include Cys-297, Cys-300, Cys-343, and Glu-350.

It belongs to the IspG family. [4Fe-4S] cluster serves as cofactor.

It carries out the reaction (2E)-4-hydroxy-3-methylbut-2-enyl diphosphate + oxidized [flavodoxin] + H2O + 2 H(+) = 2-C-methyl-D-erythritol 2,4-cyclic diphosphate + reduced [flavodoxin]. The protein operates within isoprenoid biosynthesis; isopentenyl diphosphate biosynthesis via DXP pathway; isopentenyl diphosphate from 1-deoxy-D-xylulose 5-phosphate: step 5/6. In terms of biological role, converts 2C-methyl-D-erythritol 2,4-cyclodiphosphate (ME-2,4cPP) into 1-hydroxy-2-methyl-2-(E)-butenyl 4-diphosphate. In Francisella tularensis subsp. novicida (strain U112), this protein is 4-hydroxy-3-methylbut-2-en-1-yl diphosphate synthase (flavodoxin).